Consider the following 22-residue polypeptide: Superoxide dismutase [Cu-Zn] 2 (22 aa).

Belongs to the Cu-Zn superoxide dismutase family. Homodimer. It depends on Cu cation as a cofactor. Zn(2+) is required as a cofactor. Dominant isozyme in roots.

It is found in the cytoplasm. It catalyses the reaction 2 superoxide + 2 H(+) = H2O2 + O2. Functionally, destroys radicals which are normally produced within the cells and which are toxic to biological systems. This is Superoxide dismutase [Cu-Zn] 2 from Picea abies (Norway spruce).